The primary structure comprises 938 residues: Nitrate reductase (938 aa).

The 4Fe-4S Mo/W bis-MGD-type domain occupies 1-64 (MSVVQSSCAY…RLLDSLAQPN (64 aa)). Positions 8, 11, 15, and 50 each coordinate [4Fe-4S] cluster.

Belongs to the prokaryotic molybdopterin-containing oxidoreductase family. NasA/NapA/NarB subfamily. [4Fe-4S] cluster serves as cofactor. Mo-bis(molybdopterin guanine dinucleotide) is required as a cofactor.

The protein resides in the cytoplasm. The catalysed reaction is nitrate + a quinol = a quinone + nitrite + H2O. It functions in the pathway nitrogen metabolism; nitrate reduction (assimilation). Nitrate reductase is a key enzyme involved in the first step of nitrate assimilation in plants, fungi and bacteria. This Shewanella frigidimarina (strain NCIMB 400) protein is Nitrate reductase.